Reading from the N-terminus, the 459-residue chain is Protein king tubby (459 aa).

The segment at 114–205 (HELEDEESSP…SNGAGGESEG (92 aa)) is disordered. Positions 123–155 (PVTVIEQQQTAPHSANSTHSQRPSTTRQPSFND) are enriched in polar residues. Ser-152 carries the post-translational modification Phosphoserine.

This sequence belongs to the TUB family.

It is found in the cytoplasm. The protein localises to the nucleus. It localises to the cell projection. The protein resides in the cilium membrane. Its subcellular location is the rhabdomere. This chain is Protein king tubby, found in Drosophila persimilis (Fruit fly).